Here is a 437-residue protein sequence, read N- to C-terminus: MKLWGGRFRESESELMEEFNASLSFDKKLYEEDIEGSIAHVKMLNKCKIINNEECEEILSGLKSLYKDIRSGKLKIEGDYEDIHSFVEVNLIDRIGAVGKKLHTARSRNDQVAVDMKMYVKKSSYIIIECINKLMETIKDKAENNHFIMPGYTHMQRAQVVTFTHHMMAYYSMFNRDKKRIDNAISNLNESPLGCCALAGTTYDTDREMTSKELGFSKPVDNFLDGVSDRDYIIEVLSAFSICMMHLSRLSEELIIWSTKEFSFIQMDDKFSTGSSIMPQKKNPDAAELIRGKTGRVYGDLIAMLTIMKGIPLAYNKDMQEDKEQFFDSFDTLKMCILVMDGMIATMTVKKEAMKEAVKGGFLNATDVADYLVNKGVAFRDAHKISGELVIYCENNDKAIEELNINEFKNFCNLFDEDVYEFINYNNVIKKGNKKIM.

This sequence belongs to the lyase 1 family. Argininosuccinate lyase subfamily.

The protein resides in the cytoplasm. It catalyses the reaction 2-(N(omega)-L-arginino)succinate = fumarate + L-arginine. The protein operates within amino-acid biosynthesis; L-arginine biosynthesis; L-arginine from L-ornithine and carbamoyl phosphate: step 3/3. This chain is Argininosuccinate lyase, found in Clostridium acetobutylicum (strain ATCC 824 / DSM 792 / JCM 1419 / IAM 19013 / LMG 5710 / NBRC 13948 / NRRL B-527 / VKM B-1787 / 2291 / W).